The following is a 173-amino-acid chain: Co-chaperone protein HscB homolog (173 aa).

Residues 5–77 form the J domain; the sequence is SHFALFDLEP…SQRARYLLSL (73 aa).

This sequence belongs to the HscB family. As to quaternary structure, interacts with HscA and stimulates its ATPase activity.

In terms of biological role, co-chaperone involved in the maturation of iron-sulfur cluster-containing proteins. Seems to help targeting proteins to be folded toward HscA. The chain is Co-chaperone protein HscB homolog from Azotobacter vinelandii (strain DJ / ATCC BAA-1303).